The sequence spans 469 residues: Deoxyribodipyrimidine photo-lyase (469 aa).

Residues 1–133 (MRLVWFRRDL…IWSAFDDKCV (133 aa)) form the Photolyase/cryptochrome alpha/beta domain. Glu107 contributes to the (6R)-5,10-methylene-5,6,7,8-tetrahydrofolate binding site.

It belongs to the DNA photolyase class-1 family. Monomer. The cofactor is FAD. (6R)-5,10-methylene-5,6,7,8-tetrahydrofolate serves as cofactor.

The catalysed reaction is cyclobutadipyrimidine (in DNA) = 2 pyrimidine residues (in DNA).. Involved in repair of UV radiation-induced DNA damage. Catalyzes the light-dependent monomerization (300-600 nm) of cyclobutyl pyrimidine dimers (in cis-syn configuration), which are formed between adjacent bases on the same DNA strand upon exposure to ultraviolet radiation. This chain is Deoxyribodipyrimidine photo-lyase (phrA), found in Vibrio cholerae serotype O1 (strain ATCC 39315 / El Tor Inaba N16961).